A 316-amino-acid chain; its full sequence is Transaldolase A (316 aa).

The Schiff-base intermediate with substrate role is filled by K131.

This sequence belongs to the transaldolase family. Type 1 subfamily. As to quaternary structure, homodimer.

The protein localises to the cytoplasm. The catalysed reaction is D-sedoheptulose 7-phosphate + D-glyceraldehyde 3-phosphate = D-erythrose 4-phosphate + beta-D-fructose 6-phosphate. It participates in carbohydrate degradation; pentose phosphate pathway; D-glyceraldehyde 3-phosphate and beta-D-fructose 6-phosphate from D-ribose 5-phosphate and D-xylulose 5-phosphate (non-oxidative stage): step 2/3. Its function is as follows. Transaldolase is important for the balance of metabolites in the pentose-phosphate pathway. The polypeptide is Transaldolase A (talA) (Escherichia coli O157:H7).